The primary structure comprises 237 residues: 7-cyano-7-deazaguanine synthase (237 aa).

An ATP-binding site is contributed by 14 to 24; it reads FSGGQDSATCL. 4 residues coordinate Zn(2+): cysteine 202, cysteine 217, cysteine 220, and cysteine 223.

It belongs to the QueC family. It depends on Zn(2+) as a cofactor.

It catalyses the reaction 7-carboxy-7-deazaguanine + NH4(+) + ATP = 7-cyano-7-deazaguanine + ADP + phosphate + H2O + H(+). The protein operates within purine metabolism; 7-cyano-7-deazaguanine biosynthesis. Functionally, catalyzes the ATP-dependent conversion of 7-carboxy-7-deazaguanine (CDG) to 7-cyano-7-deazaguanine (preQ(0)). The chain is 7-cyano-7-deazaguanine synthase from Rhodopseudomonas palustris (strain TIE-1).